Consider the following 1038-residue polypeptide: Dorsal-ventral patterning protein Sog (1038 aa).

Residues 1–53 (MANKLRKSNAIEWATATGTVPLLERSCCHSEDAALEPQASKTSHREQAPILRH) lie on the Cytoplasmic side of the membrane. Residues 54 to 74 (LSQLSHLLIIAGLLIVCLAGV) form a helical; Signal-anchor for type II membrane protein membrane-spanning segment. Residues 75 to 1038 (TEGRRHAPLM…QPHHQQRSSS (964 aa)) are Extracellular-facing. The region spanning 100 to 175 (TECQFGKVLR…LPGKCCKTCP (76 aa)) is the VWFC 1 domain. N-linked (GlcNAc...) asparagine glycosylation is found at N179 and N287. CHRD domains follow at residues 197-337 (NMKH…KYTA), 339-471 (QTEL…TRAS), 474-588 (IFQT…PRPV), and 592-713 (RDSA…STKV). N520, N666, N752, and N821 each carry an N-linked (GlcNAc...) asparagine glycan. The VWFC 2 domain maps to 742 to 804 (TKCFHSGRFY…RDGECCPSCV (63 aa)). 2 consecutive VWFC domains span residues 830 to 899 (RGCR…KICP) and 939 to 1020 (GGCK…TQCR).

Belongs to the chordin family. As to quaternary structure, component of a complex composed of dpp, sog and tsg. Interacts with palmitoyltransferase Hip14. Palmitoylated, probably by Hip14. In terms of processing, cleaved by metalloproteases tok and tld. Cleavage by tok during pupal development contributes to specification of the posterior crossvein in the wing. In terms of tissue distribution, abuts the dorsal dpp-expressing cells in a lateral stripe 14-16 cells wide. Later in embryogenesis it is expressed in neuroectoderm and in the endoderm spaced along the anterior-posterior axis of the developing gut.

The protein resides in the golgi apparatus membrane. It localises to the cell membrane. It is found in the secreted. Its function is as follows. Putative negative growth factor. Antagonist of dpp, a protein involved in patterning the dorsal region and in the development of the neuroectoderm; dpp inhibition is enhanced by tsg. Required for establishment of a narrow stripe of peak levels of BMP signaling in the dorsal midline of early embryos, that will give rise to the amnioserosa. During pupal development, plays a role in specification of the posterior crossvein in the wing. Exhibits both agonist and antagonist activities towards BMP signaling during pupal wing patterning. In Drosophila melanogaster (Fruit fly), this protein is Dorsal-ventral patterning protein Sog (sog).